The following is a 269-amino-acid chain: MKITSISVQQKNKERYNIFIDEKYNFSVDEEVLARYQLMKGKVLTEAEIEEIKQADMVRKGLNKAINFLSHRVRSEKEIRDYLRKQEMEAFAIDEILKKLADMDYINDLEFAELYTKTQIKTTLKGPRTIERELVEKGLTREIITQVIEEYSDEAQLENATKQAIKIMKRNNKSAKKMLQQKIITDLIQKGYTSELAKVAATEATSELDVADEAEILQKQIEKTMRKNKRYKPSIAKQKTITSLMQKGFSYDTIQSYLTENEISFEEEE.

It belongs to the RecX family.

Its subcellular location is the cytoplasm. Modulates RecA activity. The polypeptide is Regulatory protein RecX (Listeria monocytogenes serotype 4b (strain F2365)).